We begin with the raw amino-acid sequence, 156 residues long: Arginine repressor (156 aa).

It belongs to the ArgR family.

It localises to the cytoplasm. It functions in the pathway amino-acid biosynthesis; L-arginine biosynthesis [regulation]. Functionally, regulates arginine biosynthesis genes. This chain is Arginine repressor, found in Shewanella pealeana (strain ATCC 700345 / ANG-SQ1).